The chain runs to 467 residues: Na(+)-translocating NADH-quinone reductase subunit A (467 aa).

Belongs to the NqrA family. In terms of assembly, composed of six subunits; NqrA, NqrB, NqrC, NqrD, NqrE and NqrF.

The enzyme catalyses a ubiquinone + n Na(+)(in) + NADH + H(+) = a ubiquinol + n Na(+)(out) + NAD(+). Functionally, NQR complex catalyzes the reduction of ubiquinone-1 to ubiquinol by two successive reactions, coupled with the transport of Na(+) ions from the cytoplasm to the periplasm. NqrA to NqrE are probably involved in the second step, the conversion of ubisemiquinone to ubiquinol. The protein is Na(+)-translocating NADH-quinone reductase subunit A of Chlamydia pneumoniae (Chlamydophila pneumoniae).